The following is a 270-amino-acid chain: Putative phosphoenolpyruvate synthase regulatory protein (270 aa).

Residue 150 to 157 (GVSRCGKT) participates in ADP binding.

This sequence belongs to the pyruvate, phosphate/water dikinase regulatory protein family. PSRP subfamily.

It carries out the reaction [pyruvate, water dikinase] + ADP = [pyruvate, water dikinase]-phosphate + AMP + H(+). The catalysed reaction is [pyruvate, water dikinase]-phosphate + phosphate + H(+) = [pyruvate, water dikinase] + diphosphate. Its function is as follows. Bifunctional serine/threonine kinase and phosphorylase involved in the regulation of the phosphoenolpyruvate synthase (PEPS) by catalyzing its phosphorylation/dephosphorylation. The chain is Putative phosphoenolpyruvate synthase regulatory protein from Shewanella woodyi (strain ATCC 51908 / MS32).